The sequence spans 261 residues: Early 39 kDa protein (261 aa).

The tract at residues Ser-215–Glu-261 is disordered. Over residues Val-250–Glu-261 the composition is skewed to polar residues.

The polypeptide is Early 39 kDa protein (Orgyia pseudotsugata multicapsid polyhedrosis virus (OpMNPV)).